The following is a 919-amino-acid chain: Isoleucine--tRNA ligase (919 aa).

The 'HIGH' region motif lies at 57–67 (PYANGHIHIGT). Glutamate 553 contacts L-isoleucyl-5'-AMP. Residues 594–598 (KMSKS) carry the 'KMSKS' region motif. Lysine 597 is an ATP binding site. 4 residues coordinate Zn(2+): cysteine 887, cysteine 890, cysteine 907, and cysteine 910.

The protein belongs to the class-I aminoacyl-tRNA synthetase family. IleS type 1 subfamily. In terms of assembly, monomer. Requires Zn(2+) as cofactor.

It is found in the cytoplasm. It catalyses the reaction tRNA(Ile) + L-isoleucine + ATP = L-isoleucyl-tRNA(Ile) + AMP + diphosphate. Its function is as follows. Catalyzes the attachment of isoleucine to tRNA(Ile). As IleRS can inadvertently accommodate and process structurally similar amino acids such as valine, to avoid such errors it has two additional distinct tRNA(Ile)-dependent editing activities. One activity is designated as 'pretransfer' editing and involves the hydrolysis of activated Val-AMP. The other activity is designated 'posttransfer' editing and involves deacylation of mischarged Val-tRNA(Ile). The polypeptide is Isoleucine--tRNA ligase (Thermotoga maritima (strain ATCC 43589 / DSM 3109 / JCM 10099 / NBRC 100826 / MSB8)).